An 80-amino-acid chain; its full sequence is Translational regulator CsrA (80 aa).

It belongs to the CsrA/RsmA family. In terms of assembly, homodimer; the beta-strands of each monomer intercalate to form a hydrophobic core, while the alpha-helices form wings that extend away from the core.

The protein resides in the cytoplasm. In terms of biological role, a translational regulator that binds mRNA to regulate translation initiation and/or mRNA stability. Usually binds in the 5'-UTR at or near the Shine-Dalgarno sequence preventing ribosome-binding, thus repressing translation. Its main target seems to be the major flagellin gene, while its function is anatagonized by FliW. This Desulforamulus reducens (strain ATCC BAA-1160 / DSM 100696 / MI-1) (Desulfotomaculum reducens) protein is Translational regulator CsrA.